We begin with the raw amino-acid sequence, 424 residues long: Methylthioribose-1-phosphate isomerase (424 aa).

Asp-281 serves as the catalytic Proton donor.

It belongs to the eIF-2B alpha/beta/delta subunits family. MtnA subfamily.

The protein resides in the cytoplasm. It localises to the nucleus. The catalysed reaction is 5-(methylsulfanyl)-alpha-D-ribose 1-phosphate = 5-(methylsulfanyl)-D-ribulose 1-phosphate. Its pathway is amino-acid biosynthesis; L-methionine biosynthesis via salvage pathway; L-methionine from S-methyl-5-thio-alpha-D-ribose 1-phosphate: step 1/6. Functionally, catalyzes the interconversion of methylthioribose-1-phosphate (MTR-1-P) into methylthioribulose-1-phosphate (MTRu-1-P). The protein is Methylthioribose-1-phosphate isomerase of Candida dubliniensis (strain CD36 / ATCC MYA-646 / CBS 7987 / NCPF 3949 / NRRL Y-17841) (Yeast).